The sequence spans 209 residues: Ribosomal RNA large subunit methyltransferase E (209 aa).

Gly63, Trp65, Asp83, Asp99, and Asp124 together coordinate S-adenosyl-L-methionine. Catalysis depends on Lys164, which acts as the Proton acceptor.

It belongs to the class I-like SAM-binding methyltransferase superfamily. RNA methyltransferase RlmE family.

It is found in the cytoplasm. The enzyme catalyses uridine(2552) in 23S rRNA + S-adenosyl-L-methionine = 2'-O-methyluridine(2552) in 23S rRNA + S-adenosyl-L-homocysteine + H(+). Functionally, specifically methylates the uridine in position 2552 of 23S rRNA at the 2'-O position of the ribose in the fully assembled 50S ribosomal subunit. The protein is Ribosomal RNA large subunit methyltransferase E of Shewanella oneidensis (strain ATCC 700550 / JCM 31522 / CIP 106686 / LMG 19005 / NCIMB 14063 / MR-1).